The chain runs to 429 residues: Ribosomal RNA small subunit methyltransferase B (429 aa).

Residues C254–K260, D277, D303, and D322 each bind S-adenosyl-L-methionine. Residue C375 is the Nucleophile of the active site. Residues A397–D419 are disordered. Residues E400–L412 are compositionally biased toward polar residues.

It belongs to the class I-like SAM-binding methyltransferase superfamily. RsmB/NOP family.

Its subcellular location is the cytoplasm. The enzyme catalyses cytidine(967) in 16S rRNA + S-adenosyl-L-methionine = 5-methylcytidine(967) in 16S rRNA + S-adenosyl-L-homocysteine + H(+). Its function is as follows. Specifically methylates the cytosine at position 967 (m5C967) of 16S rRNA. This chain is Ribosomal RNA small subunit methyltransferase B, found in Salmonella enteritidis PT4 (strain P125109).